A 399-amino-acid chain; its full sequence is Elongation factor Tu (399 aa).

The tr-type G domain occupies 10–207 (KPHMNVGTIG…AMDTYFPDPV (198 aa)). The segment at 19 to 26 (GQIDHGKT) is G1. Residue 19–26 (GQIDHGKT) participates in GTP binding. Residue Thr-26 participates in Mg(2+) binding. The tract at residues 60 to 64 (GITIN) is G2. A G3 region spans residues 81-84 (DCPG). Residues 81 to 85 (DCPGH) and 136 to 139 (NKVD) contribute to the GTP site. The segment at 136 to 139 (NKVD) is G4. Positions 173-175 (SAL) are G5.

It belongs to the TRAFAC class translation factor GTPase superfamily. Classic translation factor GTPase family. EF-Tu/EF-1A subfamily. Monomer.

Its subcellular location is the cytoplasm. The catalysed reaction is GTP + H2O = GDP + phosphate + H(+). Its function is as follows. GTP hydrolase that promotes the GTP-dependent binding of aminoacyl-tRNA to the A-site of ribosomes during protein biosynthesis. The chain is Elongation factor Tu from Fervidobacterium islandicum.